The primary structure comprises 406 residues: Cysteine desulfurase (406 aa).

Lys-226 bears the N6-(pyridoxal phosphate)lysine mark. Cys-364 functions as the Cysteine persulfide intermediate in the catalytic mechanism.

This sequence belongs to the class-V pyridoxal-phosphate-dependent aminotransferase family. Csd subfamily. Homodimer. Interacts with SufE and the SufBCD complex composed of SufB, SufC and SufD. The interaction with SufE is required to mediate the direct transfer of the sulfur atom from the S-sulfanylcysteine. Requires pyridoxal 5'-phosphate as cofactor.

The protein localises to the cytoplasm. It catalyses the reaction (sulfur carrier)-H + L-cysteine = (sulfur carrier)-SH + L-alanine. The enzyme catalyses L-selenocysteine + AH2 = hydrogenselenide + L-alanine + A + H(+). It participates in cofactor biosynthesis; iron-sulfur cluster biosynthesis. Cysteine desulfurases mobilize the sulfur from L-cysteine to yield L-alanine, an essential step in sulfur metabolism for biosynthesis of a variety of sulfur-containing biomolecules. Component of the suf operon, which is activated and required under specific conditions such as oxidative stress and iron limitation. Acts as a potent selenocysteine lyase in vitro, that mobilizes selenium from L-selenocysteine. Selenocysteine lyase activity is however unsure in vivo. The protein is Cysteine desulfurase of Cronobacter sakazakii (strain ATCC BAA-894) (Enterobacter sakazakii).